The sequence spans 727 residues: Glycerol-3-phosphate dehydrogenase, mitochondrial (727 aa).

The N-terminal 42 residues, 1-42, are a transit peptide targeting the mitochondrion; it reads MAFQKAVKGTILVGGGALATVLGLSQFAHYRRKQMNLAYVKA. 71–99 is a binding site for FAD; it reads DILVIGGGATGSGCALDAVTRGLKTALVE. Phosphotyrosine is present on Y601. EF-hand domains lie at 623-658 and 659-694; these read SDIDRYKKRFHKFDADQKGFITIVDVQRVLESINVQ and MDENTLHEILNEVDLNKNGQVELNEFLQLMSAIQKG. 5 residues coordinate Ca(2+): D672, N674, N676, Q678, and E683.

This sequence belongs to the FAD-dependent glycerol-3-phosphate dehydrogenase family. The cofactor is FAD.

It is found in the mitochondrion. The enzyme catalyses a quinone + sn-glycerol 3-phosphate = dihydroxyacetone phosphate + a quinol. It functions in the pathway polyol metabolism; glycerol degradation via glycerol kinase pathway; glycerone phosphate from sn-glycerol 3-phosphate (anaerobic route): step 1/1. With respect to regulation, calcium-binding enhance the activity of the enzyme. In terms of biological role, calcium-responsive mitochondrial glycerol-3-phosphate dehydrogenase which seems to be a key component of the pancreatic beta-cell glucose-sensing device. The chain is Glycerol-3-phosphate dehydrogenase, mitochondrial from Homo sapiens (Human).